The primary structure comprises 530 residues: Phosphoenolpyruvate carboxykinase (ATP) (530 aa).

Residues R58, Y195, and K201 each coordinate substrate. Residues K201, H220, and 236–244 (GLSGTGKTT) contribute to the ATP site. Mn(2+)-binding residues include K201 and H220. D257 contributes to the Mn(2+) binding site. ATP-binding positions include E285, R321, 440–441 (RI), and T446. R321 serves as a coordination point for substrate.

Belongs to the phosphoenolpyruvate carboxykinase (ATP) family. Mn(2+) serves as cofactor.

Its subcellular location is the cytoplasm. It catalyses the reaction oxaloacetate + ATP = phosphoenolpyruvate + ADP + CO2. It functions in the pathway carbohydrate biosynthesis; gluconeogenesis. Functionally, involved in the gluconeogenesis. Catalyzes the conversion of oxaloacetate (OAA) to phosphoenolpyruvate (PEP) through direct phosphoryl transfer between the nucleoside triphosphate and OAA. This Staphylococcus epidermidis (strain ATCC 12228 / FDA PCI 1200) protein is Phosphoenolpyruvate carboxykinase (ATP).